The following is a 556-amino-acid chain: Formate--tetrahydrofolate ligase (556 aa).

65–72 provides a ligand contact to ATP; it reads TPAGEGKT.

It belongs to the formate--tetrahydrofolate ligase family.

It carries out the reaction (6S)-5,6,7,8-tetrahydrofolate + formate + ATP = (6R)-10-formyltetrahydrofolate + ADP + phosphate. The protein operates within one-carbon metabolism; tetrahydrofolate interconversion. In Agathobacter rectalis (strain ATCC 33656 / DSM 3377 / JCM 17463 / KCTC 5835 / VPI 0990) (Eubacterium rectale), this protein is Formate--tetrahydrofolate ligase.